Reading from the N-terminus, the 463-residue chain is Bifunctional protein GlmU (463 aa).

A pyrophosphorylase region spans residues 1–228; the sequence is MEQALSIVVL…PAEVQGVNDR (228 aa). Residues 10–13, K24, Q75, 80–81, 102–104, G138, E153, N168, and N226 each bind UDP-N-acetyl-alpha-D-glucosamine; these read LAAG, GT, and YGD. Residue D104 coordinates Mg(2+). N226 contacts Mg(2+). The interval 229-249 is linker; the sequence is VQLAAAERVWQRRQAEDWMRA. The segment at 250–463 is N-acetyltransferase; that stretch reads GVTILDPDRF…RPDRGEGSDA (214 aa). 2 residues coordinate UDP-N-acetyl-alpha-D-glucosamine: R332 and K350. The active-site Proton acceptor is H362. Y365 and N376 together coordinate UDP-N-acetyl-alpha-D-glucosamine. Acetyl-CoA is bound by residues A379, 385–386, S404, A422, and R439; that span reads NY. The tract at residues 437-463 is disordered; that stretch reads VARSAQRSIHGWRRPGQRPDRGEGSDA. Positions 453–463 are enriched in basic and acidic residues; sequence QRPDRGEGSDA.

The protein in the N-terminal section; belongs to the N-acetylglucosamine-1-phosphate uridyltransferase family. It in the C-terminal section; belongs to the transferase hexapeptide repeat family. Homotrimer. The cofactor is Mg(2+).

It localises to the cytoplasm. It catalyses the reaction alpha-D-glucosamine 1-phosphate + acetyl-CoA = N-acetyl-alpha-D-glucosamine 1-phosphate + CoA + H(+). The enzyme catalyses N-acetyl-alpha-D-glucosamine 1-phosphate + UTP + H(+) = UDP-N-acetyl-alpha-D-glucosamine + diphosphate. It participates in nucleotide-sugar biosynthesis; UDP-N-acetyl-alpha-D-glucosamine biosynthesis; N-acetyl-alpha-D-glucosamine 1-phosphate from alpha-D-glucosamine 6-phosphate (route II): step 2/2. Its pathway is nucleotide-sugar biosynthesis; UDP-N-acetyl-alpha-D-glucosamine biosynthesis; UDP-N-acetyl-alpha-D-glucosamine from N-acetyl-alpha-D-glucosamine 1-phosphate: step 1/1. The protein operates within bacterial outer membrane biogenesis; LPS lipid A biosynthesis. In terms of biological role, catalyzes the last two sequential reactions in the de novo biosynthetic pathway for UDP-N-acetylglucosamine (UDP-GlcNAc). The C-terminal domain catalyzes the transfer of acetyl group from acetyl coenzyme A to glucosamine-1-phosphate (GlcN-1-P) to produce N-acetylglucosamine-1-phosphate (GlcNAc-1-P), which is converted into UDP-GlcNAc by the transfer of uridine 5-monophosphate (from uridine 5-triphosphate), a reaction catalyzed by the N-terminal domain. In Alkalilimnicola ehrlichii (strain ATCC BAA-1101 / DSM 17681 / MLHE-1), this protein is Bifunctional protein GlmU.